The sequence spans 662 residues: Probable quinol oxidase subunit 1 (662 aa).

Transmembrane regions (helical) follow at residues 14–34 and 56–76; these read WMIISAQIAAPFLVIGLIAVI and IGIMYLISAVLMFVRGGIDAL. His-102 is a Fe(II)-heme a binding site. 8 consecutive transmembrane segments (helical) span residues 103–123, 140–160, 187–207, 228–248, 273–293, 311–331, 336–356, and 376–396; these read GVIMIIFMAMPFIFGLWNVVI, VSFWLFFAGMILFNLSFIVGG, IAIQISGIGSLMTGINFFVTI, FITTLIVILAFPVFTVALALM, FFWVWGHPEVYIVILPAFGMY, MIWATAGIAFLSFLVWVHHFF, GALINSFFSISTMLIGVPTGV, and MLFSLAFIPNFLLGGVTGVML. Cu cation is bound by residues His-279, Tyr-283, His-328, and His-329. A cross-link (1'-histidyl-3'-tyrosine (His-Tyr)) is located at residues 279 to 283; it reads HPEVY. Heme a3 is bound at residue His-414. Helical transmembrane passes span 415-435, 451-471, 492-512, 587-604, and 608-627; these read FHYTLVTGVVFACLAGLIFWY, CFWFFMIGFNVCFLPQFILGL, FISTIGAVLMAIGFLFLVASI, PVGFWMGIFMTIGGFFLI, and IVPALICLAGIFITMIWRSF. Position 416 (His-416) interacts with Fe(II)-heme a.

The protein belongs to the heme-copper respiratory oxidase family. Cu cation serves as cofactor. Requires ferriheme a as cofactor. Heme A3. is required as a cofactor.

The protein resides in the cell membrane. It catalyses the reaction 2 a quinol + O2 = 2 a quinone + 2 H2O. It functions in the pathway energy metabolism; oxidative phosphorylation. Its function is as follows. Catalyzes quinol oxidation with the concomitant reduction of oxygen to water. The chain is Probable quinol oxidase subunit 1 (qoxB) from Staphylococcus epidermidis (strain ATCC 35984 / DSM 28319 / BCRC 17069 / CCUG 31568 / BM 3577 / RP62A).